Reading from the N-terminus, the 431-residue chain is Beta-1,4-glucuronyltransferase 1 (431 aa).

Residues 1-11 (MHFSKKCSVFK) are Cytoplasmic-facing. Residues 12–32 (VVLSALLIVALLQLLYLSFLS) traverse the membrane as a helical segment. Topologically, residues 33-431 (KLHGKQQRYK…AKYPTSPRRC (399 aa)) are lumenal. The N-linked (GlcNAc...) asparagine glycan is linked to N216. 2 residues coordinate Mn(2+): D241 and D243. A glycan (N-linked (GlcNAc...) asparagine) is linked at N314.

This sequence belongs to the glycosyltransferase 49 family. Mn(2+) is required as a cofactor.

Its subcellular location is the golgi apparatus membrane. It catalyses the reaction 3-O-[beta-D-Xyl-(1-&gt;4)-Rib-ol-P-Rib-ol-P-3-beta-D-GalNAc-(1-&gt;3)-beta-D-GlcNAc-(1-&gt;4)-(O-6-P-alpha-D-Man)]-Thr-[protein] + UDP-alpha-D-glucuronate = 3-O-[beta-D-GlcA-(1-&gt;3)-beta-D-Xyl-(1-&gt;4)-Rib-ol-P-Rib-ol-P-3-beta-D-GalNAc-(1-&gt;3)-beta-D-GlcNAc-(1-&gt;4)-(O-6-P-alpha-D-Man)]-Thr-[protein] + UDP + H(+). The protein operates within protein modification; protein glycosylation. In terms of biological role, beta-1,4-glucuronyltransferase involved in O-mannosylation of alpha-dystroglycan (DAG1). Transfers a glucuronic acid (GlcA) residue onto a xylose (Xyl) acceptor to produce the glucuronyl-beta-1,4-xylose-beta disaccharide primer, which is further elongated by LARGE, during synthesis of phosphorylated O-mannosyl glycan. Phosphorylated O-mannosyl glycan is a carbohydrate structure present in alpha-dystroglycan (DAG1), which is required for binding laminin G-like domain-containing extracellular proteins with high affinity. Required for axon guidance; via its function in O-mannosylation of alpha-dystroglycan (DAG1). This chain is Beta-1,4-glucuronyltransferase 1, found in Danio rerio (Zebrafish).